We begin with the raw amino-acid sequence, 594 residues long: UvrABC system protein C (594 aa).

The GIY-YIG domain occupies Asp-15–Ile-92. Residues Ala-197–Thr-232 form the UVR domain.

The protein belongs to the UvrC family. Interacts with UvrB in an incision complex.

It localises to the cytoplasm. The UvrABC repair system catalyzes the recognition and processing of DNA lesions. UvrC both incises the 5' and 3' sides of the lesion. The N-terminal half is responsible for the 3' incision and the C-terminal half is responsible for the 5' incision. This is UvrABC system protein C from Pediococcus pentosaceus (strain ATCC 25745 / CCUG 21536 / LMG 10740 / 183-1w).